Consider the following 159-residue polypeptide: Large ribosomal subunit protein uL15 (159 aa).

The interval 14-44 is disordered; the sequence is ASRKRVGRGRATGWGCTSGRGNKGQNSRAGA. Residues 23–35 are compositionally biased toward gly residues; it reads RATGWGCTSGRGN.

It belongs to the universal ribosomal protein uL15 family. In terms of assembly, part of the 50S ribosomal subunit.

Functionally, binds to the 23S rRNA. This is Large ribosomal subunit protein uL15 from Solidesulfovibrio magneticus (strain ATCC 700980 / DSM 13731 / RS-1) (Desulfovibrio magneticus).